A 400-amino-acid polypeptide reads, in one-letter code: Carnosine N-methyltransferase (400 aa).

Positions 1–49 (MQRRRRAPPASQPAQDSGHSEEVEVQFSAGRLGSAAPAGPPVRGTAEDE) are disordered. Residues Q155, R158, G199, E220, D286, F287, and C303 each contribute to the S-adenosyl-L-methionine site. Residue D307 coordinates carnosine. An S-adenosyl-L-methionine-binding site is contributed by Y315. 2 residues coordinate carnosine: H338 and Y389.

The protein belongs to the carnosine N-methyltransferase family. As to quaternary structure, homodimer. Each monomer accommodates one molecule of carnosine in its active pocket, precisely anchoring the histidine imidazole ring such that only N1 is exposed and deprotonated for methylation. Expressed at higher level in skeletal muscle compared to other tissues.

Its subcellular location is the cytoplasm. It localises to the cytosol. It is found in the nucleus. It catalyses the reaction carnosine + S-adenosyl-L-methionine = anserine + S-adenosyl-L-homocysteine + H(+). Its function is as follows. N-methyltransferase that catalyzes the formation of anserine (beta-alanyl-N(Pi)-methyl-L-histidine) from carnosine. Anserine, a methylated derivative of carnosine (beta-alanyl-L-histidine), is an abundant constituent of vertebrate skeletal muscles. Also methylates other L-histidine-containing di- and tripeptides such as Gly-Gly-His, Gly-His and homocarnosine (GABA-His). The polypeptide is Carnosine N-methyltransferase (Rattus norvegicus (Rat)).